We begin with the raw amino-acid sequence, 489 residues long: Rhamnulokinase (489 aa).

Residue A13–R17 coordinates ATP. The cysteines at positions 68 and 222 are disulfide-linked. Substrate contacts are provided by residues G83 and H236 to T238. D237 functions as the Proton acceptor in the catalytic mechanism. T259 serves as a coordination point for ATP. N296 is a binding site for substrate. Q304 contributes to the ATP binding site. Residues C353 and C370 are joined by a disulfide bond. ATP is bound at residue G402. A disulfide bond links C413 and C417.

It belongs to the rhamnulokinase family. It depends on Mg(2+) as a cofactor.

It catalyses the reaction L-rhamnulose + ATP = L-rhamnulose 1-phosphate + ADP + H(+). The protein operates within carbohydrate degradation; L-rhamnose degradation; glycerone phosphate from L-rhamnose: step 2/3. Involved in the catabolism of L-rhamnose (6-deoxy-L-mannose). Catalyzes the transfer of the gamma-phosphate group from ATP to the 1-hydroxyl group of L-rhamnulose to yield L-rhamnulose 1-phosphate. The sequence is that of Rhamnulokinase from Salmonella choleraesuis (strain SC-B67).